A 536-amino-acid polypeptide reads, in one-letter code: ATPase expression protein 3 (536 aa).

2 PPR repeats span residues T212–P246 and T386–P421.

Its subcellular location is the mitochondrion inner membrane. Required for respiration. The sequence is that of ATPase expression protein 3 (AEP3) from Eremothecium gossypii (strain ATCC 10895 / CBS 109.51 / FGSC 9923 / NRRL Y-1056) (Yeast).